The chain runs to 114 residues: Cytochrome c oxidase assembly protein cox16, mitochondrial (114 aa).

Residues 29-49 form a helical membrane-spanning segment; sequence PFLLFGLPFMSVIVAGSFILT.

This sequence belongs to the COX16 family.

Its subcellular location is the mitochondrion inner membrane. In terms of biological role, required for the assembly of the mitochondrial respiratory chain complex IV (CIV), also known as cytochrome c oxidase. May participate in merging the COX1 and COX2 assembly lines. The chain is Cytochrome c oxidase assembly protein cox16, mitochondrial (cox-9) from Neurospora crassa (strain ATCC 24698 / 74-OR23-1A / CBS 708.71 / DSM 1257 / FGSC 987).